The following is a 396-amino-acid chain: Tryptophan synthase beta chain (396 aa).

The residue at position 86 (lysine 86) is an N6-(pyridoxal phosphate)lysine.

Belongs to the TrpB family. As to quaternary structure, tetramer of two alpha and two beta chains. Pyridoxal 5'-phosphate serves as cofactor.

It catalyses the reaction (1S,2R)-1-C-(indol-3-yl)glycerol 3-phosphate + L-serine = D-glyceraldehyde 3-phosphate + L-tryptophan + H2O. Its pathway is amino-acid biosynthesis; L-tryptophan biosynthesis; L-tryptophan from chorismate: step 5/5. Its function is as follows. The beta subunit is responsible for the synthesis of L-tryptophan from indole and L-serine. The protein is Tryptophan synthase beta chain of Yersinia pseudotuberculosis serotype O:1b (strain IP 31758).